A 372-amino-acid chain; its full sequence is Alanine dehydrogenase (372 aa).

2 residues coordinate substrate: arginine 15 and lysine 75. The active-site Proton donor/acceptor is histidine 96. NAD(+) contacts are provided by residues serine 134, 178–179 (TA), aspartate 198, serine 220, 239–240 (VL), 266–269 (IAID), arginine 279, and 298–301 (VANM). Aspartate 269 serves as the catalytic Proton donor/acceptor.

The protein belongs to the AlaDH/PNT family. In terms of assembly, homohexamer.

The protein resides in the cytoplasm. The catalysed reaction is L-alanine + NAD(+) + H2O = pyruvate + NH4(+) + NADH + H(+). The protein operates within amino-acid degradation; L-alanine degradation via dehydrogenase pathway; NH(3) and pyruvate from L-alanine: step 1/1. In terms of biological role, catalyzes the reversible reductive amination of pyruvate to L-alanine. A key factor in the assimilation of L-alanine as an energy source via the tricarboxylic acid cycle during sporulation. The sequence is that of Alanine dehydrogenase (ald) from Geobacillus stearothermophilus (Bacillus stearothermophilus).